The chain runs to 149 residues: 3-hydroxyacyl-[acyl-carrier-protein] dehydratase FabZ (149 aa).

His47 is a catalytic residue.

It belongs to the thioester dehydratase family. FabZ subfamily.

The protein localises to the cytoplasm. The catalysed reaction is a (3R)-hydroxyacyl-[ACP] = a (2E)-enoyl-[ACP] + H2O. Functionally, involved in unsaturated fatty acids biosynthesis. Catalyzes the dehydration of short chain beta-hydroxyacyl-ACPs and long chain saturated and unsaturated beta-hydroxyacyl-ACPs. The chain is 3-hydroxyacyl-[acyl-carrier-protein] dehydratase FabZ from Thioalkalivibrio sulfidiphilus (strain HL-EbGR7).